Here is a 169-residue protein sequence, read N- to C-terminus: Shikimate kinase (169 aa).

13-18 contacts ATP; that stretch reads GAGKST. Position 17 (S17) interacts with Mg(2+). The substrate site is built by D35, R59, and G80. R117 contacts ATP. Position 136 (R136) interacts with substrate. R153 contacts ATP.

This sequence belongs to the shikimate kinase family. In terms of assembly, monomer. Mg(2+) is required as a cofactor.

The protein localises to the cytoplasm. It carries out the reaction shikimate + ATP = 3-phosphoshikimate + ADP + H(+). Its pathway is metabolic intermediate biosynthesis; chorismate biosynthesis; chorismate from D-erythrose 4-phosphate and phosphoenolpyruvate: step 5/7. Its function is as follows. Catalyzes the specific phosphorylation of the 3-hydroxyl group of shikimic acid using ATP as a cosubstrate. The polypeptide is Shikimate kinase (Corynebacterium efficiens (strain DSM 44549 / YS-314 / AJ 12310 / JCM 11189 / NBRC 100395)).